The chain runs to 165 residues: Dihydrofolate reductase type A13 (165 aa).

The DHFR domain occupies R7–R162.

The protein belongs to the dihydrofolate reductase family. Homodimer.

The enzyme catalyses (6S)-5,6,7,8-tetrahydrofolate + NADP(+) = 7,8-dihydrofolate + NADPH + H(+). Its pathway is cofactor biosynthesis; tetrahydrofolate biosynthesis; 5,6,7,8-tetrahydrofolate from 7,8-dihydrofolate: step 1/1. Functionally, key enzyme in folate metabolism. Catalyzes an essential reaction for de novo glycine and purine synthesis, and for DNA precursor synthesis. This chain is Dihydrofolate reductase type A13 (dfrA13), found in Escherichia coli.